A 137-amino-acid polypeptide reads, in one-letter code: Sch210972 biosynthesis cluster protein E (137 aa).

A compositionally biased stretch (polar residues) spans 1-12 (MTKYTSVNSSLP). Residues 1–137 (MTKYTSVNSS…ASTIRPPCCG (137 aa)) form a disordered region. Over residues 15-27 (PRQTTPTRPATQT) the composition is skewed to low complexity. Positions 51–71 (GSLNGSPTLRTTLDTSLSGTR) are enriched in polar residues. The span at 94-109 (DEDHPHDPGPDSDAKK) shows a compositional bias: basic and acidic residues.

It participates in secondary metabolite biosynthesis. Its function is as follows. Part of the gene cluster that mediates the biosynthesis of the tetramic acid Sch210972, a potential anti-HIV fungal natural product that contains a decalin core. The PKS module of cghG together with the enoylreductase cghC catalyze the formation of the polyketide unit which is then conjugated to 4-hydroxyl-4-methyl glutamate (HMG) by the condensation domain of the cghG NRPS module. One unique structural feature of Sch210972 is the tetramic acid motif proposed to be derived from the non-proteinogenic amino acid HMG, by a Dieckmann-type condensation catalyzed by the reductase domain of cghG. The aldolase cghB catalyzes the aldol condensation of 2 molecules of pyruvic acid to yield the intermediate 4-hydroxyl-4-methyl-2-oxoglutarate (HMOG), which can then be stereoselectively transaminated by an unidentified enzyme to form HMG. The Diels-Alderase cghA then uses the Dieckmann product released by cghG as substrate and catalyzes the Diels-Alder cycloaddition to form the decalin ring of Sch210972. CghA also suppresses the nonenzymatic formation of the alternative stereoisomer. This chain is Sch210972 biosynthesis cluster protein E, found in Chaetomium globosum (strain ATCC 6205 / CBS 148.51 / DSM 1962 / NBRC 6347 / NRRL 1970) (Soil fungus).